The sequence spans 164 residues: Protein-export protein SecB (164 aa).

The span at 1-12 shows a compositional bias: basic and acidic residues; it reads MPDKDEITHDAQ. The disordered stretch occupies residues 1–22; the sequence is MPDKDEITHDAQSENEESLPLA.

The protein belongs to the SecB family. In terms of assembly, homotetramer, a dimer of dimers. One homotetramer interacts with 1 SecA dimer.

It localises to the cytoplasm. Its function is as follows. One of the proteins required for the normal export of preproteins out of the cell cytoplasm. It is a molecular chaperone that binds to a subset of precursor proteins, maintaining them in a translocation-competent state. It also specifically binds to its receptor SecA. This Neorickettsia sennetsu (strain ATCC VR-367 / Miyayama) (Ehrlichia sennetsu) protein is Protein-export protein SecB.